The sequence spans 869 residues: Bifunctional uridylyltransferase/uridylyl-removing enzyme (869 aa).

Positions 1–332 are uridylyltransferase; sequence MTATPADRPD…QFDGEAVPVQ (332 aa). The segment at 333–691 is uridylyl-removing; the sequence is LDAGFSLRRG…RRAVPDNDAL (359 aa). Residues 450-572 enclose the HD domain; the sequence is VDQHTLMVLR…VGTRERLDYL (123 aa). 2 consecutive ACT domains span residues 692–771 and 798–869; these read EVFV…PSRR and RISL…LDPT.

It belongs to the GlnD family. It depends on Mg(2+) as a cofactor.

The enzyme catalyses [protein-PII]-L-tyrosine + UTP = [protein-PII]-uridylyl-L-tyrosine + diphosphate. The catalysed reaction is [protein-PII]-uridylyl-L-tyrosine + H2O = [protein-PII]-L-tyrosine + UMP + H(+). With respect to regulation, uridylyltransferase (UTase) activity is inhibited by glutamine, while glutamine activates uridylyl-removing (UR) activity. Its function is as follows. Modifies, by uridylylation and deuridylylation, the PII regulatory proteins (GlnB and homologs), in response to the nitrogen status of the cell that GlnD senses through the glutamine level. Under low glutamine levels, catalyzes the conversion of the PII proteins and UTP to PII-UMP and PPi, while under higher glutamine levels, GlnD hydrolyzes PII-UMP to PII and UMP (deuridylylation). Thus, controls uridylylation state and activity of the PII proteins, and plays an important role in the regulation of nitrogen assimilation and metabolism. This Xanthomonas campestris pv. campestris (strain 8004) protein is Bifunctional uridylyltransferase/uridylyl-removing enzyme.